Here is a 141-residue protein sequence, read N- to C-terminus: Hemoglobin subunit alpha-A (141 aa).

The 141-residue stretch at 1 to 141 (VLSAADKNNV…VGTVLTAKYR (141 aa)) folds into the Globin domain. Residue His-58 coordinates O2. Heme b is bound at residue His-87.

This sequence belongs to the globin family. As to quaternary structure, heterotetramer of two alpha chains and two beta chains. Red blood cells.

In terms of biological role, involved in oxygen transport from the lung to the various peripheral tissues. The protein is Hemoglobin subunit alpha-A (HBAA) of Phasianus colchicus colchicus (Black-necked pheasant).